Consider the following 233-residue polypeptide: Small ribosomal subunit protein uS3 (233 aa).

The KH type-2 domain occupies 39-107 (IRAFLKRKLY…DVNINIKEER (69 aa)). Positions 212-222 (MQPEKTEESAP) are enriched in basic and acidic residues. Residues 212 to 233 (MQPEKTEESAPAKKSRRTRRGK) are disordered. Residues 224–233 (KKSRRTRRGK) are compositionally biased toward basic residues.

This sequence belongs to the universal ribosomal protein uS3 family. In terms of assembly, part of the 30S ribosomal subunit. Forms a tight complex with proteins S10 and S14.

Functionally, binds the lower part of the 30S subunit head. Binds mRNA in the 70S ribosome, positioning it for translation. The polypeptide is Small ribosomal subunit protein uS3 (Campylobacter jejuni subsp. doylei (strain ATCC BAA-1458 / RM4099 / 269.97)).